The primary structure comprises 466 residues: Xanthine permease XanQ (466 aa).

At 1 to 44 (MSDINHAGSDLIFELEDRPPFHQALVGAITHLLAIFVPMVTPAL) the chain is on the cytoplasmic side. Residues 45–65 (IVGAALQLSAETTAYLVSMAM) form a helical membrane-spanning segment. At 66 to 74 (IASGIGTWL) the chain is on the periplasmic side. The chain crosses the membrane as a helical span at residues 75-95 (QVNRYGIVGSGLLSIQSVNFS). Over 96-99 (FVTV) the chain is Cytoplasmic. A helical transmembrane segment spans residues 100 to 120 (MIALGSSMKSDGFHEELIMSS). The Periplasmic segment spans residues 121 to 139 (LLGVSFVGAFLVVGSSFIL). The chain crosses the membrane as a helical span at residues 140–160 (PYLRRVITPTVSGIVVLMIGL). Over 161–170 (SLIKVGIIDF) the chain is Cytoplasmic. A helical transmembrane segment spans residues 171–191 (GGGFAAKSSGTFGNYEHLGVG). Over 192–199 (LLVLIVVI) the chain is Periplasmic. Residues 200-220 (GFNCCRSPLLRMGGIAIGLCV) traverse the membrane as a helical segment. Over 221–229 (GYIASLCLG) the chain is Cytoplasmic. The helical transmembrane segment at 230-250 (MVDFSSMRNLPLITIPHPFKY) threads the bilayer. Topologically, residues 251 to 277 (GFSFSFHQFLVVGTIYLLSVLEAVGDI) are periplasmic. The chain crosses the membrane as a helical span at residues 278 to 298 (TATAMVSRRPIQGEEYQSRLK). Over 299 to 317 (GGVLADGLVSVIASAVGSL) the chain is Cytoplasmic. The helical transmembrane segment at 318–338 (PLTTFAQNNGVIQMTGVASRY) threads the bilayer. Residues 339-361 (VGRTIAVMLVILGLFPMIGGFFT) are Periplasmic-facing. A helical membrane pass occupies residues 362–382 (TIPSAVLGGAMTLMFSMIAIA). A topological domain (cytoplasmic) is located at residue glycine 383. Residues 384–403 (IRIIITNGLKRRETLIVATS) traverse the membrane as a helical segment. At 404–444 (LGLGLGVSYDPEIFKILPASIYVLVENPICAGGLTAILLNI) the chain is on the periplasmic side. Residues 445–465 (ILPGGYRQENVLPGITSAEEM) form a helical membrane-spanning segment. Aspartate 466 is a topological domain (cytoplasmic).

Belongs to the nucleobase:cation symporter-2 (NCS2) (TC 2.A.40) family.

The protein resides in the cell inner membrane. The enzyme catalyses xanthine(in) + H(+)(in) = xanthine(out) + H(+)(out). Specific, proton motive force-dependent high-affinity transporter for xanthine. The sequence is that of Xanthine permease XanQ (xanQ) from Escherichia coli O157:H7.